The following is a 288-amino-acid chain: Glycine--tRNA ligase alpha subunit (288 aa).

Belongs to the class-II aminoacyl-tRNA synthetase family. In terms of assembly, tetramer of two alpha and two beta subunits.

The protein localises to the cytoplasm. It catalyses the reaction tRNA(Gly) + glycine + ATP = glycyl-tRNA(Gly) + AMP + diphosphate. The sequence is that of Glycine--tRNA ligase alpha subunit from Desulfatibacillum aliphaticivorans.